The following is a 286-amino-acid chain: Protein FAM87A (286 aa).

2 helical membrane passes run tyrosine 68–leucine 88 and serine 161–leucine 181.

This sequence belongs to the FAM87 family.

It is found in the membrane. The sequence is that of Protein FAM87A (FAM87A) from Homo sapiens (Human).